Here is a 275-residue protein sequence, read N- to C-terminus: Large ribosomal subunit protein uL2 (275 aa).

Over residues T36–I49 the composition is skewed to polar residues. Disordered stretches follow at residues T36–K59 and A224–R275. Over residues T50 to K59 the composition is skewed to basic residues.

The protein belongs to the universal ribosomal protein uL2 family. As to quaternary structure, part of the 50S ribosomal subunit. Forms a bridge to the 30S subunit in the 70S ribosome.

Its function is as follows. One of the primary rRNA binding proteins. Required for association of the 30S and 50S subunits to form the 70S ribosome, for tRNA binding and peptide bond formation. It has been suggested to have peptidyltransferase activity; this is somewhat controversial. Makes several contacts with the 16S rRNA in the 70S ribosome. This Burkholderia vietnamiensis (strain G4 / LMG 22486) (Burkholderia cepacia (strain R1808)) protein is Large ribosomal subunit protein uL2.